The chain runs to 51 residues: Large ribosomal subunit protein eL39 (51 aa).

Belongs to the eukaryotic ribosomal protein eL39 family. As to quaternary structure, part of the 50S ribosomal subunit.

The sequence is that of Large ribosomal subunit protein eL39 from Thermococcus kodakarensis (strain ATCC BAA-918 / JCM 12380 / KOD1) (Pyrococcus kodakaraensis (strain KOD1)).